We begin with the raw amino-acid sequence, 3206 residues long: Genome polyprotein (3206 aa).

A Peptidase S30 domain is found at 255-397; that stretch reads KMKTESIDVL…WRKMFQIDHF (143 aa). Residues H307, D316, and S348 each act as for P1 proteinase activity in the active site. The short motif at 450–453 is the Involved in interaction with stylet and aphid transmission element; that stretch reads RITC. The Involved in virions binding and aphid transmission signature appears at 708–710; the sequence is PTR. The region spanning 734-856 is the Peptidase C6 domain; that stretch reads MWIAKEGYCY…LGEMKMYRVG (123 aa). Residues C742 and H815 each act as for helper component proteinase activity in the active site. A Helicase ATP-binding domain is found at 1338-1490; the sequence is IAHTPDFSEY…TQFPVTIATE (153 aa). 1351–1358 contributes to the ATP binding site; that stretch reads GAVGSGKS. A DECH box motif is present at residues 1440 to 1443; sequence DECH. Residues 1494-1668 form the Helicase C-terminal domain; it reads SFDQFVQAQG…GLPVMTSNVS (175 aa). The Nuclear localization signal signature appears at 1994–2001; that stretch reads KKGKKSGK. Y2016 is subject to O-(5'-phospho-RNA)-tyrosine. The Peptidase C4 domain occupies 2150 to 2368; sequence AASLHFGLRD…VCWGGLELLD (219 aa). Active-site for nuclear inclusion protein A activity residues include H2195, D2230, and C2300. The RdRp catalytic domain maps to 2637 to 2761; sequence WLYCDADGSR…AVRPDCEFVL (125 aa). A disordered region spans residues 2900 to 2979; sequence HYNDEGGDGS…DRDVDAGSSG (80 aa). Composition is skewed to basic and acidic residues over residues 2916 to 2939 and 2949 to 2974; these read AGDE…REES and RDNK…RDVD.

Belongs to the potyviridae genome polyprotein family. In terms of assembly, interacts with host eIF4E protein (via cap-binding region); this interaction mediates the translation of the VPg-viral RNA conjugates. Part of a complex that comprises VPg, RNA, host EIF4E and EIF4G; this interaction mediates the translation of the VPg-viral RNA conjugates. In terms of processing, VPg is uridylylated by the polymerase and is covalently attached to the 5'-end of the genomic RNA. This uridylylated form acts as a nucleotide-peptide primer for the polymerase. Post-translationally, potyviral RNA is expressed as two polyproteins which undergo post-translational proteolytic processing. Genome polyprotein is processed by NIa-pro, P1 and HC-pro proteinases resulting in the production of at least ten individual proteins. P3N-PIPO polyprotein is cleaved by P1 and HC-pro proteinases resulting in the production of three individual proteins. The P1 proteinase and the HC-pro cleave only their respective C-termini autocatalytically. 6K1 is essential for proper proteolytic separation of P3 from CI.

It localises to the host cytoplasmic vesicle. It is found in the host nucleus. The protein resides in the virion. It carries out the reaction RNA(n) + a ribonucleoside 5'-triphosphate = RNA(n+1) + diphosphate. The enzyme catalyses Hydrolyzes glutaminyl bonds, and activity is further restricted by preferences for the amino acids in P6 - P1' that vary with the species of potyvirus, e.g. Glu-Xaa-Xaa-Tyr-Xaa-Gln-|-(Ser or Gly) for the enzyme from tobacco etch virus. The natural substrate is the viral polyprotein, but other proteins and oligopeptides containing the appropriate consensus sequence are also cleaved.. The catalysed reaction is Hydrolyzes a Gly-|-Gly bond at its own C-terminus, commonly in the sequence -Tyr-Xaa-Val-Gly-|-Gly, in the processing of the potyviral polyprotein.. Its function is as follows. Required for aphid transmission and also has proteolytic activity. Only cleaves a Gly-Gly dipeptide at its own C-terminus. Interacts with virions and aphid stylets. Acts as a suppressor of RNA-mediated gene silencing, also known as post-transcriptional gene silencing (PTGS), a mechanism of plant viral defense that limits the accumulation of viral RNAs. May have RNA-binding activity. In terms of biological role, has helicase activity. It may be involved in replication. Indispensable for virus replication. Functionally, mediates the cap-independent, EIF4E-dependent translation of viral genomic RNAs. Binds to the cap-binding site of host EIF4E and thus interferes with the host EIF4E-dependent mRNA export and translation. VPg-RNA directly binds EIF4E and is a template for transcription. Also forms trimeric complexes with EIF4E-EIF4G, which are templates for translation. Its function is as follows. Has RNA-binding and proteolytic activities. In terms of biological role, an RNA-dependent RNA polymerase that plays an essential role in the virus replication. Involved in aphid transmission, cell-to-cell and systemis movement, encapsidation of the viral RNA and in the regulation of viral RNA amplification. The sequence is that of Genome polyprotein from Pisum sativum (Garden pea).